A 142-amino-acid chain; its full sequence is Large ribosomal subunit protein uL11 (142 aa).

Belongs to the universal ribosomal protein uL11 family. Part of the ribosomal stalk of the 50S ribosomal subunit. Interacts with L10 and the large rRNA to form the base of the stalk. L10 forms an elongated spine to which L12 dimers bind in a sequential fashion forming a multimeric L10(L12)X complex. Post-translationally, one or more lysine residues are methylated.

In terms of biological role, forms part of the ribosomal stalk which helps the ribosome interact with GTP-bound translation factors. The protein is Large ribosomal subunit protein uL11 of Solibacter usitatus (strain Ellin6076).